The chain runs to 433 residues: Arrestin domain-containing protein 1 (433 aa).

Disordered regions lie at residues 296 to 322 (GLGL…AEAA) and 349 to 372 (LSSV…PLHP). Over residues 301-312 (PGAPPLVVPSAP) the composition is skewed to pro residues. 2 short sequence motifs (PPxY motif) span residues 402–405 (PPEY) and 415–418 (PPSY).

It belongs to the arrestin family. In terms of assembly, interacts (via PPxY motifs) with ITCH (via WW domains); the interaction is direct and participates in the recruitment of the ubiquitin-protein ligase ITCH to the NOTCH1 receptor. Interacts with ARRB1 and ARRB2; the interaction is direct. Interacts with TSG101; may recruit TSG101 to the plasma membrane. Interacts (via PPxY motifs) with WWP2 (via WW domains); ubiquitinates ARRDC1. Interacts with SLC11A2; controls the incorporation of SLC11A2 into extracellular vesicles through an ubiquitination-dependent mechanism. Interacts with WWP1 (via WW domains). Interacts with NEDD4 (via WW domains). Interacts with PDCD6IP. Ubiquitinated. Ubiquitination by WWP2; promotes localization to extracellular microvesicles. Ubiquitinated by WWP1.

It is found in the cell membrane. In terms of biological role, functions as an adapter recruiting ubiquitin-protein ligases to their specific substrates. Through an ubiquitination-dependent mechanism plays for instance a role in the incorporation of SLC11A2 into extracellular vesicles. More generally, plays a role in the extracellular transport of proteins between cells through the release in the extracellular space of microvesicles. By participating in the ITCH-mediated ubiquitination and subsequent degradation of NOTCH1, negatively regulates the NOTCH signaling pathway. The sequence is that of Arrestin domain-containing protein 1 from Homo sapiens (Human).